The following is a 577-amino-acid chain: Maltase A1 (577 aa).

Positions 1–19 (MRPQSAACLLLAIVGFVGA) are cleaved as a signal peptide. Residues Asn119 and Asn151 are each glycosylated (N-linked (GlcNAc...) asparagine). Asp221 (nucleophile) is an active-site residue. Asn244 carries N-linked (GlcNAc...) asparagine glycosylation. The active-site Proton donor is Glu297. N-linked (GlcNAc...) asparagine glycosylation is found at Asn315 and Asn331.

Belongs to the glycosyl hydrolase 13 family.

It catalyses the reaction Hydrolysis of terminal, non-reducing (1-&gt;4)-linked alpha-D-glucose residues with release of alpha-D-glucose.. This chain is Maltase A1 (Mal-A1), found in Drosophila melanogaster (Fruit fly).